Consider the following 198-residue polypeptide: Nucleoid occlusion factor SlmA (198 aa).

Residues 9–70 (RNRREEILQA…SLIEFIEDSL (62 aa)) form the HTH tetR-type domain. Positions 33 to 52 (TTAKLAANVGVSEAALYRHF) form a DNA-binding region, H-T-H motif. A coiled-coil region spans residues 117-144 (EQDRLQGRINQLFERIEAQLRQVLKERK).

This sequence belongs to the nucleoid occlusion factor SlmA family. Homodimer. Interacts with FtsZ.

It localises to the cytoplasm. The protein localises to the nucleoid. Its function is as follows. Required for nucleoid occlusion (NO) phenomenon, which prevents Z-ring formation and cell division over the nucleoid. Acts as a DNA-associated cell division inhibitor that binds simultaneously chromosomal DNA and FtsZ, and disrupts the assembly of FtsZ polymers. SlmA-DNA-binding sequences (SBS) are dispersed on non-Ter regions of the chromosome, preventing FtsZ polymerization at these regions. The chain is Nucleoid occlusion factor SlmA from Serratia proteamaculans (strain 568).